Reading from the N-terminus, the 693-residue chain is DNA ligase (693 aa).

Residues 43 to 47 (DEEYD), 92 to 93 (SL), and Glu123 contribute to the NAD(+) site. The active-site N6-AMP-lysine intermediate is the Lys125. 4 residues coordinate NAD(+): Arg146, Glu180, Lys296, and Lys320. Positions 414, 417, 433, and 438 each coordinate Zn(2+). The 90-residue stretch at 595–684 (VKYDVLKGLT…AKLKGYNFDE (90 aa)) folds into the BRCT domain.

Belongs to the NAD-dependent DNA ligase family. LigA subfamily. The cofactor is Mg(2+). Requires Mn(2+) as cofactor.

It carries out the reaction NAD(+) + (deoxyribonucleotide)n-3'-hydroxyl + 5'-phospho-(deoxyribonucleotide)m = (deoxyribonucleotide)n+m + AMP + beta-nicotinamide D-nucleotide.. DNA ligase that catalyzes the formation of phosphodiester linkages between 5'-phosphoryl and 3'-hydroxyl groups in double-stranded DNA using NAD as a coenzyme and as the energy source for the reaction. It is essential for DNA replication and repair of damaged DNA. The chain is DNA ligase from Thermotoga neapolitana (strain ATCC 49049 / DSM 4359 / NBRC 107923 / NS-E).